Here is a 110-residue protein sequence, read N- to C-terminus: Large ribosomal subunit protein uL22 (110 aa).

Belongs to the universal ribosomal protein uL22 family. As to quaternary structure, part of the 50S ribosomal subunit.

Its function is as follows. This protein binds specifically to 23S rRNA; its binding is stimulated by other ribosomal proteins, e.g. L4, L17, and L20. It is important during the early stages of 50S assembly. It makes multiple contacts with different domains of the 23S rRNA in the assembled 50S subunit and ribosome. Functionally, the globular domain of the protein is located near the polypeptide exit tunnel on the outside of the subunit, while an extended beta-hairpin is found that lines the wall of the exit tunnel in the center of the 70S ribosome. The polypeptide is Large ribosomal subunit protein uL22 (Aggregatibacter actinomycetemcomitans (Actinobacillus actinomycetemcomitans)).